The sequence spans 338 residues: Lipoate-protein ligase A (338 aa).

Residues 29 to 216 (PATQRVLFLW…AFFAHYGERV (188 aa)) enclose the BPL/LPL catalytic domain. ATP-binding positions include arginine 71, 76 to 79 (GAVF), and lysine 134. Lysine 134 provides a ligand contact to (R)-lipoate.

It belongs to the LplA family. Monomer.

Its subcellular location is the cytoplasm. It carries out the reaction L-lysyl-[lipoyl-carrier protein] + (R)-lipoate + ATP = N(6)-[(R)-lipoyl]-L-lysyl-[lipoyl-carrier protein] + AMP + diphosphate + H(+). It functions in the pathway protein modification; protein lipoylation via exogenous pathway; protein N(6)-(lipoyl)lysine from lipoate: step 1/2. The protein operates within protein modification; protein lipoylation via exogenous pathway; protein N(6)-(lipoyl)lysine from lipoate: step 2/2. Functionally, catalyzes both the ATP-dependent activation of exogenously supplied lipoate to lipoyl-AMP and the transfer of the activated lipoyl onto the lipoyl domains of lipoate-dependent enzymes. The chain is Lipoate-protein ligase A from Escherichia fergusonii (strain ATCC 35469 / DSM 13698 / CCUG 18766 / IAM 14443 / JCM 21226 / LMG 7866 / NBRC 102419 / NCTC 12128 / CDC 0568-73).